Consider the following 199-residue polypeptide: HTH-type transcriptional repressor NemR (199 aa).

Residues His7 to Tyr67 form the HTH tetR-type domain. The H-T-H motif DNA-binding region spans Gly30–Phe49.

Its function is as follows. Involved in response to both electrophiles and reactive chlorine species (RCS). Represses the transcription of the nemRA-gloA operon by binding to the NemR box. This is HTH-type transcriptional repressor NemR (nemR) from Escherichia coli O6:H1 (strain CFT073 / ATCC 700928 / UPEC).